We begin with the raw amino-acid sequence, 701 residues long: Polyribonucleotide nucleotidyltransferase (701 aa).

Aspartate 490 and aspartate 496 together coordinate Mg(2+). Residues proline 557–isoleucine 616 form the KH domain. In terms of domain architecture, S1 motif spans glycine 626–lysine 694.

Belongs to the polyribonucleotide nucleotidyltransferase family. Mg(2+) serves as cofactor.

It is found in the cytoplasm. It carries out the reaction RNA(n+1) + phosphate = RNA(n) + a ribonucleoside 5'-diphosphate. Functionally, involved in mRNA degradation. Catalyzes the phosphorolysis of single-stranded polyribonucleotides processively in the 3'- to 5'-direction. This chain is Polyribonucleotide nucleotidyltransferase, found in Staphylococcus epidermidis (strain ATCC 12228 / FDA PCI 1200).